The chain runs to 277 residues: 2,3,4,5-tetrahydropyridine-2,6-dicarboxylate N-succinyltransferase (277 aa).

Substrate-binding residues include Arg106 and Asp143.

The protein belongs to the transferase hexapeptide repeat family. Homotrimer.

It is found in the cytoplasm. The enzyme catalyses (S)-2,3,4,5-tetrahydrodipicolinate + succinyl-CoA + H2O = (S)-2-succinylamino-6-oxoheptanedioate + CoA. Its pathway is amino-acid biosynthesis; L-lysine biosynthesis via DAP pathway; LL-2,6-diaminopimelate from (S)-tetrahydrodipicolinate (succinylase route): step 1/3. This Variovorax paradoxus (strain S110) protein is 2,3,4,5-tetrahydropyridine-2,6-dicarboxylate N-succinyltransferase.